The sequence spans 296 residues: 4-hydroxy-tetrahydrodipicolinate synthase (296 aa).

Thr-46 is a binding site for pyruvate. Residue Tyr-134 is the Proton donor/acceptor of the active site. Lys-162 (schiff-base intermediate with substrate) is an active-site residue. Residue Ile-204 coordinates pyruvate.

This sequence belongs to the DapA family. Homotetramer; dimer of dimers.

It is found in the cytoplasm. The enzyme catalyses L-aspartate 4-semialdehyde + pyruvate = (2S,4S)-4-hydroxy-2,3,4,5-tetrahydrodipicolinate + H2O + H(+). The protein operates within amino-acid biosynthesis; L-lysine biosynthesis via DAP pathway; (S)-tetrahydrodipicolinate from L-aspartate: step 3/4. Its function is as follows. Catalyzes the condensation of (S)-aspartate-beta-semialdehyde [(S)-ASA] and pyruvate to 4-hydroxy-tetrahydrodipicolinate (HTPA). This is 4-hydroxy-tetrahydrodipicolinate synthase from Clostridium novyi (strain NT).